Reading from the N-terminus, the 329-residue chain is Mitochondrial substrate carrier family protein Q (329 aa).

Solcar repeat units follow at residues 18–115 (VEAL…LKSI), 125–206 (LGTI…LRAL), and 216–310 (LGGL…VVIH). The next 6 helical transmembrane spans lie at 21-41 (LGHAISGGVAGMAAIALTYPF), 95-115 (LIGIGASSFVYYYWYTLLKSI), 131-151 (LAIAALAGCANVLTTLPIWVV), 175-195 (GFGGLYKGLIPALILVSNPSV), 221-241 (VFILGAIAKLIAGIVTYPYLL), and 298-318 (AFMFLVKDKVVIHAVAILFYL).

Belongs to the mitochondrial carrier (TC 2.A.29) family.

It localises to the peroxisome membrane. Its function is as follows. May have transport activity. The sequence is that of Mitochondrial substrate carrier family protein Q (mcfQ) from Dictyostelium discoideum (Social amoeba).